Consider the following 355-residue polypeptide: Double-stranded RNA-binding protein 4 (355 aa).

DRBM domains follow at residues 4–73 (VYKG…SLTP) and 82–150 (AYKN…SIKN). A compositionally biased stretch (polar residues) spans 149–188 (KNGNSNQTGSPTLPSERQEDVNSNVKSSPQEIHSQPSSKV). The disordered stretch occupies residues 149–193 (KNGNSNQTGSPTLPSERQEDVNSNVKSSPQEIHSQPSSKVVMTPD).

In terms of assembly, heterodimer with DRB1 or DRB5. Interacts with DCL4 and cauliflower mosaic virus (CaMV) transactivator/viroplasmin protein. Interaction with CaMV transactivator/viroplasmin protein inhibits RNA silencing ability of DRB4. As to expression, expressed in roots, leaf vasculature, shoot apical meristem (SAM) and developing anthers.

Its subcellular location is the nucleus. Functionally, double-stranded RNA-binding protein involved in RNA-mediated post-transcriptional gene silencing (PTGS). Functions in the trans-acting small interfering RNAs (ta-siRNAs) biogenesis by binding and assisting DICER-LIKE 4 (DCL4). Required for DCL4 activity. Required for the 21 nucleotide ta-siRNAs production of the TAS3 transcript in leaves but not in flowers. Plays an important role in silencing RNA of both DNA and RNA viruses. Involved with argonaute 7 (AGO7) and RDR6 in turnip crinkle virus (TCV) silencing. May not be directly involved in viral siRNA production. May stabilize the 21 nucleotide viral siRNAs and deliver them to the RISC complex. Targeted by the viral silencing suppressor (VSR) transactivator/viroplasmin (TAV) protein of the cauliflower mosaic virus (CaMV) that inactivates DRB4 function in RNA silencing. Probably not involved in the guide strand selection from RNA duplexes. Involved in leaf morphology through its function in ta-siRNA-mediated silencing. The sequence is that of Double-stranded RNA-binding protein 4 (DBR4) from Arabidopsis thaliana (Mouse-ear cress).